A 373-amino-acid polypeptide reads, in one-letter code: Alginate lyase (373 aa).

The signal sequence occupies residues 1–25 (MRLPMQKLLIPTLLGLAMFAGSVNA). Substrate contacts are provided by residues 66-67 (SK), 139-140 (HT), and tyrosine 257.

It belongs to the polysaccharide lyase 5 family.

It is found in the periplasm. It catalyses the reaction Eliminative cleavage of alginate to give oligosaccharides with 4-deoxy-alpha-L-erythro-hex-4-enuronosyl groups at their non-reducing ends and beta-D-mannuronate at their reducing end.. Functionally, catalyzes the depolymerization of alginate by cleaving the beta-1,4 glycosidic bond between two adjacent sugar residues via a beta-elimination mechanism. May serve to degrade mislocalized alginate that is trapped in the periplasmic space. In Pseudomonas fluorescens, this protein is Alginate lyase.